A 124-amino-acid polypeptide reads, in one-letter code: Riboflavin kinase (124 aa).

Position 10–15 (10–15) interacts with CDP; it reads GLGKAA. Mg(2+) is bound by residues T39 and N41. Residues T93 and E101 each contribute to the FMN site. 106–109 contributes to the CDP binding site; it reads DKLR.

This sequence belongs to the archaeal riboflavin kinase family. The cofactor is Mg(2+).

It carries out the reaction riboflavin + CTP = CDP + FMN + H(+). Its pathway is cofactor biosynthesis; FMN biosynthesis; FMN from riboflavin (CTP route): step 1/1. In terms of biological role, catalyzes the CTP-dependent phosphorylation of riboflavin (vitamin B2) to form flavin mononucleotide (FMN). In Methanobrevibacter smithii (strain ATCC 35061 / DSM 861 / OCM 144 / PS), this protein is Riboflavin kinase.